Consider the following 201-residue polypeptide: Imidazoleglycerol-phosphate dehydratase (201 aa).

Belongs to the imidazoleglycerol-phosphate dehydratase family.

The protein localises to the cytoplasm. It carries out the reaction D-erythro-1-(imidazol-4-yl)glycerol 3-phosphate = 3-(imidazol-4-yl)-2-oxopropyl phosphate + H2O. The protein operates within amino-acid biosynthesis; L-histidine biosynthesis; L-histidine from 5-phospho-alpha-D-ribose 1-diphosphate: step 6/9. The sequence is that of Imidazoleglycerol-phosphate dehydratase from Synechococcus sp. (strain CC9902).